The primary structure comprises 380 residues: Serpin B7 (380 aa).

Phosphoserine occurs at positions 217 and 223.

Belongs to the serpin family. Ov-serpin subfamily. In terms of tissue distribution, predominantly expressed in mesangial cells. Expressed in the epidermis of the whole body.

It is found in the cytoplasm. In terms of biological role, might function as an inhibitor of Lys-specific proteases. Might influence the maturation of megakaryocytes via its action as a serpin. The polypeptide is Serpin B7 (SERPINB7) (Homo sapiens (Human)).